A 302-amino-acid chain; its full sequence is Ornithine carbamoyltransferase (302 aa).

Carbamoyl phosphate-binding positions include 47–50 (STRT), glutamine 74, arginine 98, and 125–128 (HPCQ). L-ornithine-binding positions include asparagine 156, aspartate 220, and 224 to 225 (SM). Residues 260-261 (CL) and arginine 288 each bind carbamoyl phosphate.

The protein belongs to the aspartate/ornithine carbamoyltransferase superfamily. OTCase family.

It is found in the cytoplasm. The catalysed reaction is carbamoyl phosphate + L-ornithine = L-citrulline + phosphate + H(+). The protein operates within amino-acid biosynthesis; L-arginine biosynthesis; L-arginine from L-ornithine and carbamoyl phosphate: step 1/3. Functionally, reversibly catalyzes the transfer of the carbamoyl group from carbamoyl phosphate (CP) to the N(epsilon) atom of ornithine (ORN) to produce L-citrulline. The chain is Ornithine carbamoyltransferase from Methanosphaera stadtmanae (strain ATCC 43021 / DSM 3091 / JCM 11832 / MCB-3).